We begin with the raw amino-acid sequence, 106 residues long: UPF0145 protein VV2_1464 (106 aa).

The protein belongs to the UPF0145 family.

This Vibrio vulnificus (strain CMCP6) protein is UPF0145 protein VV2_1464.